The sequence spans 2497 residues: Highly reducing polyketide synthase aurA (2497 aa).

In terms of domain architecture, Ketosynthase family 3 (KS3) spans 3–437 (PEPIAIIGSG…GTNSHAILES (435 aa)). Residues Cys-175, His-314, and His-357 each act as for beta-ketoacyl synthase activity in the active site. Residues 575–896 (IFTGQGAQWP…ISTLSRGATG (322 aa)) form a malonyl-CoA:ACP transacylase (MAT) domain region. Ser-669 (for malonyltransferase activity) is an active-site residue. The interval 965 to 1095 (HELLGDLSEE…GQLVVTWGEM (131 aa)) is N-terminal hotdog fold. A dehydratase (DH) domain region spans residues 965 to 1255 (HELLGDLSEE…EGVHVTPLMQ (291 aa)). The PKS/mFAS DH domain maps to 965 to 1259 (HELLGDLSEE…VTPLMQPTAS (295 aa)). Residue His-997 is the Proton acceptor; for dehydratase activity of the active site. The C-terminal hotdog fold stretch occupies residues 1110-1259 (MSVVDTDEFY…VTPLMQPTAS (150 aa)). The active-site Proton donor; for dehydratase activity is the Asp-1166. A methyltransferase (CMet) domain region spans residues 1399–1594 (NLLTRFYDQE…TGFGGVQSIL (196 aa)). Residues 2150-2294 (KTYLLVASRT…RRERNLVGSI (145 aa)) form a ketoreductase (KR) domain region. A Carrier domain is found at 2409–2487 (EAAELVLIAL…DLANSATSKI (79 aa)). Ser-2447 bears the O-(pantetheine 4'-phosphoryl)serine mark.

Requires pantetheine 4'-phosphate as cofactor.

It participates in polyketide biosynthesis. Functionally, highly reducing polyketide synthase (HR-PKS); part of the gene cluster that mediates the biosynthesis of aurovertins, fungal polyketides that exhibit potent inhibition of adenosine triphosphate synthase. Tha biosynthesis starts with the HR-PKS aurA that selects propionate as the starter unit; synthesizes a hexa-ene chain through the repeated functions of the KR and DH domains in the first six iterations; selectively introduces three alpha-methyl substitutions at C4, C6, and C16 using the S-adensylmethionine-dependent cMET; and shuts off KR and DH in the last three iterations to afford a 1,3,5-triketo portion that can undergo intramolecular cyclization to yield the alpha-pyrone intermediate. AurE may act as a cyclase and enhances the rate of pyrone formation and product release of aurA. The methyltransferase aurB then methylates the C17 hydroxyl group. C17 methylation is required to initiate epoxidation by the downstream monooxygenase aurC. The monooxygenase aurC and the epoxide hydrolase aurD can iteratively transform the terminal triene portion of the methylated precursor into the dioxabicyclo[3.2.1]octane scaffold of aurovertin E. Epoxidation modifications of the precursor occur in two separate steps; bis-epoxidation of the two terminal olefins takes place first, followed by another epoxidation that occurs at C7-C8 after tetrahydrofuran formation. The O-acyltransferase aurG converts aurovertin E to aurovertin A. This chain is Highly reducing polyketide synthase aurA, found in Calcarisporium arbuscula (Dendryphion arbuscula).